The primary structure comprises 388 residues: Chorismate synthase (388 aa).

NADP(+) is bound by residues R39 and R45. Residues 132–134 (RSS), 251–252 (NA), G296, 311–315 (KPIPT), and R337 contribute to the FMN site.

This sequence belongs to the chorismate synthase family. Homotetramer. Requires FMNH2 as cofactor.

The enzyme catalyses 5-O-(1-carboxyvinyl)-3-phosphoshikimate = chorismate + phosphate. The protein operates within metabolic intermediate biosynthesis; chorismate biosynthesis; chorismate from D-erythrose 4-phosphate and phosphoenolpyruvate: step 7/7. Catalyzes the anti-1,4-elimination of the C-3 phosphate and the C-6 proR hydrogen from 5-enolpyruvylshikimate-3-phosphate (EPSP) to yield chorismate, which is the branch point compound that serves as the starting substrate for the three terminal pathways of aromatic amino acid biosynthesis. This reaction introduces a second double bond into the aromatic ring system. This is Chorismate synthase from Staphylococcus aureus (strain COL).